Here is a 602-residue protein sequence, read N- to C-terminus: Pentatricopeptide repeat-containing protein At5g11310, mitochondrial (602 aa).

The N-terminal 35 residues, 1–35 (MNSLFTAFRRNLLLNPNPHRNFFLHRLLSSSRRSS), are a transit peptide targeting the mitochondrion. PPR repeat units follow at residues 134–165 (SPSL…VRSD), 172–202 (SADT…ARSY), 211–241 (ELRL…IGGT), 249–283 (SVRI…NVKP), 284–318 (TVVT…EMEI), 319–353 (NFMV…ESGP), 354–388 (TIVT…GVDP), 389–423 (TTTT…GHSP), 424–458 (DRLT…GIDP), 459–493 (DLLT…GIIP), and 494–528 (QYIT…PHSK).

The protein belongs to the PPR family. P subfamily.

It is found in the mitochondrion. The polypeptide is Pentatricopeptide repeat-containing protein At5g11310, mitochondrial (Arabidopsis thaliana (Mouse-ear cress)).